The primary structure comprises 841 residues: Auxin response factor 24 (841 aa).

A disordered region spans residues 109–140 (LPEKQQDGNGSGNGNVSKDKVEEEEVVPPAAT). Residues 148–250 (FCKTLTASDT…ELRVGVRRAM (103 aa)) constitute a DNA-binding region (TF-B3). Disordered stretches follow at residues 366–397 (PRPD…KRAR), 663–715 (QDAL…SRSC), and 804–841 (GALN…SENC). The segment covering 684-695 (AQHDSAREKHQS) has biased composition (basic and acidic residues). Polar residues-rich tracts occupy residues 701–713 (KNIQ…GSSR) and 830–841 (GLSTPSLNSENC). The 85-residue stretch at 713–797 (RSCKKVHKQG…HKIFIYTREE (85 aa)) folds into the PB1 domain.

It belongs to the ARF family. Homodimers and heterodimers. As to expression, expressed in roots, culms, leaves and young panicles.

The protein localises to the nucleus. Its function is as follows. Auxin response factors (ARFs) are transcriptional factors that bind specifically to the DNA sequence 5'-TGTCTC-3' found in the auxin-responsive promoter elements (AuxREs). In Oryza sativa subsp. japonica (Rice), this protein is Auxin response factor 24 (ARF24).